A 593-amino-acid polypeptide reads, in one-letter code: Tyrosine-protein phosphatase non-receptor type 11 (593 aa).

Threonine 2 bears the N-acetylthreonine mark. SH2 domains are found at residues 6 to 102 (WFHP…KYPL) and 112 to 216 (WFHG…KQPL). Phosphotyrosine occurs at positions 62 and 66. The Tyrosine-protein phosphatase domain occupies 247 to 521 (FWEEFETLQQ…RFIYMAVQHY (275 aa)). Residues aspartate 425, 459 to 465 (CSAGIGR), and glutamine 506 each bind substrate. Cysteine 459 functions as the Phosphocysteine intermediate in the catalytic mechanism. 2 positions are modified to phosphotyrosine; by PDGFR: tyrosine 542 and tyrosine 580.

It belongs to the protein-tyrosine phosphatase family. Non-receptor class 2 subfamily. As to quaternary structure, interacts with CD84 and with phosphorylated SIT1 and MZPL1. Interacts with FCRL4, FCRL6 and ANKHD1. Interacts with GAREM1 (tyrosine phosphorylated); the interaction increases MAPK/ERK activity and does not affect the GRB2/SOS complex formation. Interacts with PTPNS1 and BCAR3. Interacts with phosphorylated LIME1. Interacts with SHB and INPP5D/SHIP1. Interacts with KIR2DL1; the interaction is enhanced by ARRB2. Interacts with GAB2. Interacts with TERT; the interaction retains TERT in the nucleus. Interacts with PECAM1 and FER. Interacts with EPHA2 (activated); participates in PTK2/FAK1 dephosphorylation in EPHA2 downstream signaling. Interacts with MILR1 (tyrosine phosphorylated). Interacts with FLT1 (tyrosine-phosphorylated), FLT3 (tyrosine-phosphorylated), FLT4 (tyrosine-phosphorylated), KIT and GRB2. Interacts with ROS1; mediates PTPN11 phosphorylation. Interacts with PDGFRA (tyrosine phosphorylated). Interacts with PDGFRB (tyrosine phosphorylated); this interaction increases the PTPN11 phosphatase activity. Interacts (via SH2 domain) with TEK/TIE2 (tyrosine phosphorylated). Interacts with CEACAM1 (via cytoplasmic domain); this interaction depends on the monomer/dimer equilibrium and is phosphorylation-dependent. Interacts with MPIG6B (via ITIM motif). Interacts with SIGLEC10. Interacts with Lilrb4a (when tyrosine phosphorylated). Interacts with SIGLEC10. Interacts with CLEC12B (via ITIM motif); this interaction triggers dephosphorylation and activation of PTPN11. Interacts (via SH2 domains) with NEDD9/CAS-L; the interaction is enhanced when NEDD9/CAS-L is tyrosine phosphorylated. Interacts with PIRB; when PIRB is phosphorylated by LYN at 'Tyr-794' and 'Tyr-824'. Phosphorylated on Tyr-542 and Tyr-580 upon receptor protein tyrosine kinase activation; which creates a binding site for GRB2 and other SH2-containing proteins. Phosphorylated upon activation of the receptor-type kinase FLT3. Phosphorylated by activated PDGFRB. Phosphorylated upon activation of the receptor-type kinase PDGFRA. Highly expressed in brain, heart and kidney.

The protein resides in the cytoplasm. It carries out the reaction O-phospho-L-tyrosyl-[protein] + H2O = L-tyrosyl-[protein] + phosphate. Functionally, acts downstream of various receptor and cytoplasmic protein tyrosine kinases to participate in the signal transduction from the cell surface to the nucleus. Positively regulates MAPK signal transduction pathway. Dephosphorylates GAB1, ARHGAP35 and EGFR. Dephosphorylates ROCK2 at 'Tyr-722' resulting in stimulation of its RhoA binding activity. Dephosphorylates CDC73. Dephosphorylates SOX9 on tyrosine residues, leading to inactivate SOX9 and promote ossification. Dephosphorylates tyrosine-phosphorylated NEDD9/CAS-L. This Mus musculus (Mouse) protein is Tyrosine-protein phosphatase non-receptor type 11 (Ptpn11).